A 98-amino-acid polypeptide reads, in one-letter code: Protein translation factor SUI1 homolog (98 aa).

This sequence belongs to the SUI1 family.

The sequence is that of Protein translation factor SUI1 homolog from Thermococcus gammatolerans (strain DSM 15229 / JCM 11827 / EJ3).